The chain runs to 134 residues: Small ribosomal subunit protein uS8c (134 aa).

Belongs to the universal ribosomal protein uS8 family. In terms of assembly, part of the 30S ribosomal subunit.

The protein resides in the plastid. Its subcellular location is the chloroplast. Functionally, one of the primary rRNA binding proteins, it binds directly to 16S rRNA central domain where it helps coordinate assembly of the platform of the 30S subunit. The protein is Small ribosomal subunit protein uS8c (rps8) of Lactuca sativa (Garden lettuce).